Consider the following 643-residue polypeptide: Threonine--tRNA ligase (643 aa).

The 62-residue stretch at 3 to 64 (DVVKITFPDG…EEDGAISIIT (62 aa)) folds into the TGS domain. Residues 245–542 (DHRKLGKELD…LIEEYKGAFP (298 aa)) form a catalytic region. Residues Cys-338, His-389, and His-519 each contribute to the Zn(2+) site.

It belongs to the class-II aminoacyl-tRNA synthetase family. Homodimer. Requires Zn(2+) as cofactor.

The protein localises to the cytoplasm. The enzyme catalyses tRNA(Thr) + L-threonine + ATP = L-threonyl-tRNA(Thr) + AMP + diphosphate + H(+). Its function is as follows. Catalyzes the attachment of threonine to tRNA(Thr) in a two-step reaction: L-threonine is first activated by ATP to form Thr-AMP and then transferred to the acceptor end of tRNA(Thr). Also edits incorrectly charged L-seryl-tRNA(Thr). The polypeptide is Threonine--tRNA ligase (Anoxybacillus flavithermus (strain DSM 21510 / WK1)).